The primary structure comprises 293 residues: Probable porphobilinogen deaminase (293 aa).

The residue at position 233 (Cys-233) is an S-(dipyrrolylmethanemethyl)cysteine.

The protein belongs to the HMBS family. The cofactor is dipyrromethane.

It carries out the reaction 4 porphobilinogen + H2O = hydroxymethylbilane + 4 NH4(+). Its pathway is porphyrin-containing compound metabolism; protoporphyrin-IX biosynthesis; coproporphyrinogen-III from 5-aminolevulinate: step 2/4. Tetrapolymerization of the monopyrrole PBG into the hydroxymethylbilane pre-uroporphyrinogen in several discrete steps. The chain is Probable porphobilinogen deaminase from Saccharolobus islandicus (strain M.16.27) (Sulfolobus islandicus).